The primary structure comprises 390 residues: Pyruvate dehydrogenase E1 component subunit alpha, somatic form, mitochondrial (390 aa).

The transit peptide at M1–N29 directs the protein to the mitochondrion. K63 bears the N6-acetyllysine; alternate mark. K63 bears the N6-succinyllysine; alternate mark. Positions 92, 118, 119, 157, 165, 167, 196, 197, 198, 225, and 227 each coordinate pyruvate. Thiamine diphosphate-binding residues include Y118 and R119. Residues G165, V167, D196, G197, A198, and N225 each coordinate thiamine diphosphate. Mg(2+) is bound at residue D196. The Mg(2+) site is built by N225 and Y227. S232 is modified (phosphoserine; by PDK1). K244 carries the N6-acetyllysine; alternate modification. K244 is modified (N6-succinyllysine; alternate). K277 bears the N6-succinyllysine mark. H292 serves as a coordination point for thiamine diphosphate. Position 293 is a phosphoserine; by PDK1, PDK2, PDK3 and PDK4 (S293). The residue at position 295 (S295) is a Phosphoserine. The residue at position 300 (S300) is a Phosphoserine; by PDK1, PDK2, PDK3 and PDK4. Position 301 is a phosphotyrosine (Y301). K313 carries the N6-acetyllysine; alternate modification. Residue K313 is modified to N6-succinyllysine; alternate. Residues K321 and K336 each carry the N6-acetyllysine modification. K385 carries the N6-succinyllysine modification.

Heterotetramer of two PDHA1 and two PDHB subunits. The heterotetramer interacts with DLAT, and is part of the multimeric pyruvate dehydrogenase complex that contains multiple copies of pyruvate dehydrogenase (E1), dihydrolipoamide acetyltransferase (DLAT, E2) and lipoamide dehydrogenase (DLD, E3). These subunits are bound to an inner core composed of about 48 DLAT and 12 PDHX molecules. Requires thiamine diphosphate as cofactor. It depends on Mg(2+) as a cofactor. Phosphorylation at Ser-232, Ser-293 and Ser-300 by PDK family kinases inactivates the enzyme; for this phosphorylation at a single site is sufficient. Phosphorylation at Ser-293 interferes with access to active site, and thereby inactivates the enzyme. Dephosphorylation at all three sites, i.e. at Ser-232, Ser-293 and Ser-300, is required for reactivation. In terms of processing, acetylation alters the phosphorylation pattern. Deacetylated by SIRT3.

Its subcellular location is the mitochondrion matrix. It carries out the reaction N(6)-[(R)-lipoyl]-L-lysyl-[protein] + pyruvate + H(+) = N(6)-[(R)-S(8)-acetyldihydrolipoyl]-L-lysyl-[protein] + CO2. Its activity is regulated as follows. Pyruvate dehydrogenase activity is inhibited by phosphorylation of PDHA1; it is reactivated by dephosphorylation. In terms of biological role, the pyruvate dehydrogenase complex catalyzes the overall conversion of pyruvate to acetyl-CoA and CO(2), and thereby links the glycolytic pathway to the tricarboxylic cycle. The chain is Pyruvate dehydrogenase E1 component subunit alpha, somatic form, mitochondrial (PDHA1) from Macaca fascicularis (Crab-eating macaque).